A 154-amino-acid chain; its full sequence is Aspartate carbamoyltransferase regulatory chain (154 aa).

Cys109, Cys114, Cys138, and Cys141 together coordinate Zn(2+).

The protein belongs to the PyrI family. In terms of assembly, contains catalytic and regulatory chains. It depends on Zn(2+) as a cofactor.

Involved in allosteric regulation of aspartate carbamoyltransferase. This chain is Aspartate carbamoyltransferase regulatory chain, found in Yersinia enterocolitica serotype O:8 / biotype 1B (strain NCTC 13174 / 8081).